The primary structure comprises 204 residues: Large ribosomal subunit protein uL4 (204 aa).

Residues 49–75 (TKGRSDVSGGGKKPWRQKGRGGARAGS) form a disordered region.

It belongs to the universal ribosomal protein uL4 family. Part of the 50S ribosomal subunit.

One of the primary rRNA binding proteins, this protein initially binds near the 5'-end of the 23S rRNA. It is important during the early stages of 50S assembly. It makes multiple contacts with different domains of the 23S rRNA in the assembled 50S subunit and ribosome. In terms of biological role, forms part of the polypeptide exit tunnel. The polypeptide is Large ribosomal subunit protein uL4 (Campylobacter jejuni subsp. doylei (strain ATCC BAA-1458 / RM4099 / 269.97)).